The chain runs to 151 residues: Putative truncated GMC-type inactive oxidoreductase L893 (151 aa).

This sequence belongs to the GMC oxidoreductase family.

The protein localises to the virion. This Acanthamoeba polyphaga (Amoeba) protein is Putative truncated GMC-type inactive oxidoreductase L893.